We begin with the raw amino-acid sequence, 276 residues long: Phosphonoacetaldehyde hydrolase (276 aa).

D19 serves as the catalytic Nucleophile. 2 residues coordinate Mg(2+): D19 and A21. K60 serves as the catalytic Schiff-base intermediate with substrate. A Mg(2+)-binding site is contributed by D193.

Belongs to the HAD-like hydrolase superfamily. PhnX family. As to quaternary structure, homodimer. Requires Mg(2+) as cofactor.

It catalyses the reaction phosphonoacetaldehyde + H2O = acetaldehyde + phosphate + H(+). Functionally, involved in phosphonate degradation. The chain is Phosphonoacetaldehyde hydrolase from Bordetella bronchiseptica (strain ATCC BAA-588 / NCTC 13252 / RB50) (Alcaligenes bronchisepticus).